A 155-amino-acid polypeptide reads, in one-letter code: 6,7-dimethyl-8-ribityllumazine synthase (155 aa).

5-amino-6-(D-ribitylamino)uracil-binding positions include Phe24, 58–60 (AFE), and 82–84 (AVI). Residue 87 to 88 (ST) coordinates (2S)-2-hydroxy-3-oxobutyl phosphate. Catalysis depends on His90, which acts as the Proton donor. Phe115 is a 5-amino-6-(D-ribitylamino)uracil binding site. Arg129 is a (2S)-2-hydroxy-3-oxobutyl phosphate binding site.

Belongs to the DMRL synthase family.

It carries out the reaction (2S)-2-hydroxy-3-oxobutyl phosphate + 5-amino-6-(D-ribitylamino)uracil = 6,7-dimethyl-8-(1-D-ribityl)lumazine + phosphate + 2 H2O + H(+). Its pathway is cofactor biosynthesis; riboflavin biosynthesis; riboflavin from 2-hydroxy-3-oxobutyl phosphate and 5-amino-6-(D-ribitylamino)uracil: step 1/2. In terms of biological role, catalyzes the formation of 6,7-dimethyl-8-ribityllumazine by condensation of 5-amino-6-(D-ribitylamino)uracil with 3,4-dihydroxy-2-butanone 4-phosphate. This is the penultimate step in the biosynthesis of riboflavin. This chain is 6,7-dimethyl-8-ribityllumazine synthase, found in Acetivibrio thermocellus (strain ATCC 27405 / DSM 1237 / JCM 9322 / NBRC 103400 / NCIMB 10682 / NRRL B-4536 / VPI 7372) (Clostridium thermocellum).